Reading from the N-terminus, the 217-residue chain is Thiamine-phosphate synthase (217 aa).

Residues 39-43 (QYRDK) and Asn71 contribute to the 4-amino-2-methyl-5-(diphosphooxymethyl)pyrimidine site. The Mg(2+) site is built by Asp72 and Asp91. Thr110 contributes to the 4-amino-2-methyl-5-(diphosphooxymethyl)pyrimidine binding site. 137–139 (SNT) serves as a coordination point for 2-[(2R,5Z)-2-carboxy-4-methylthiazol-5(2H)-ylidene]ethyl phosphate. Lys140 provides a ligand contact to 4-amino-2-methyl-5-(diphosphooxymethyl)pyrimidine. Position 167 (Gly167) interacts with 2-[(2R,5Z)-2-carboxy-4-methylthiazol-5(2H)-ylidene]ethyl phosphate.

Belongs to the thiamine-phosphate synthase family. Requires Mg(2+) as cofactor.

It carries out the reaction 2-[(2R,5Z)-2-carboxy-4-methylthiazol-5(2H)-ylidene]ethyl phosphate + 4-amino-2-methyl-5-(diphosphooxymethyl)pyrimidine + 2 H(+) = thiamine phosphate + CO2 + diphosphate. The enzyme catalyses 2-(2-carboxy-4-methylthiazol-5-yl)ethyl phosphate + 4-amino-2-methyl-5-(diphosphooxymethyl)pyrimidine + 2 H(+) = thiamine phosphate + CO2 + diphosphate. The catalysed reaction is 4-methyl-5-(2-phosphooxyethyl)-thiazole + 4-amino-2-methyl-5-(diphosphooxymethyl)pyrimidine + H(+) = thiamine phosphate + diphosphate. It participates in cofactor biosynthesis; thiamine diphosphate biosynthesis; thiamine phosphate from 4-amino-2-methyl-5-diphosphomethylpyrimidine and 4-methyl-5-(2-phosphoethyl)-thiazole: step 1/1. Its function is as follows. Condenses 4-methyl-5-(beta-hydroxyethyl)thiazole monophosphate (THZ-P) and 2-methyl-4-amino-5-hydroxymethyl pyrimidine pyrophosphate (HMP-PP) to form thiamine monophosphate (TMP). This is Thiamine-phosphate synthase from Saccharophagus degradans (strain 2-40 / ATCC 43961 / DSM 17024).